Here is a 261-residue protein sequence, read N- to C-terminus: Cytochrome c oxidase subunit 3 (261 aa).

The Mitochondrial matrix portion of the chain corresponds to 1–15; the sequence is MTHQTHAYHMVNPSP. A helical membrane pass occupies residues 16-34; the sequence is WPLTGALSALLMTSGLVMW. Over 35 to 40 the chain is Mitochondrial intermembrane; that stretch reads FHYHST. The chain crosses the membrane as a helical span at residues 41-66; the sequence is ILVLLGLLTNILTMYQWWRDVVREGT. The Mitochondrial matrix segment spans residues 67 to 72; the sequence is FQGHHT. Residues 73–105 form a helical membrane-spanning segment; it reads PTVQKGLRYGMVLFIISEVFFFAGFFWAFYHSS. Topologically, residues 106–128 are mitochondrial intermembrane; that stretch reads LAPTPELGGCWPPTGIHPLDPME. The helical transmembrane segment at 129 to 152 threads the bilayer; the sequence is VPLLNTSVLLASGVTITWAHHSLM. Topologically, residues 153-155 are mitochondrial matrix; sequence EGN. Residues 156–183 form a helical membrane-spanning segment; it reads RKQMLQALFITISLGIYFTLLQASEYHE. Topologically, residues 184-190 are mitochondrial intermembrane; sequence ASFSISD. A helical membrane pass occupies residues 191-223; sequence GIYGSTFFMATGFHGLHVIIGSTFLAVCFLRQL. The Mitochondrial matrix portion of the chain corresponds to 224–232; sequence KFHFTSNHH. A helical membrane pass occupies residues 233 to 256; sequence FGFEAAAWYWHFVDVVWLFLYVSI. The Mitochondrial intermembrane portion of the chain corresponds to 257–261; sequence YWWGS.

It belongs to the cytochrome c oxidase subunit 3 family. As to quaternary structure, component of the cytochrome c oxidase (complex IV, CIV), a multisubunit enzyme composed of 14 subunits. The complex is composed of a catalytic core of 3 subunits MT-CO1, MT-CO2 and MT-CO3, encoded in the mitochondrial DNA, and 11 supernumerary subunits COX4I, COX5A, COX5B, COX6A, COX6B, COX6C, COX7A, COX7B, COX7C, COX8 and NDUFA4, which are encoded in the nuclear genome. The complex exists as a monomer or a dimer and forms supercomplexes (SCs) in the inner mitochondrial membrane with NADH-ubiquinone oxidoreductase (complex I, CI) and ubiquinol-cytochrome c oxidoreductase (cytochrome b-c1 complex, complex III, CIII), resulting in different assemblies (supercomplex SCI(1)III(2)IV(1) and megacomplex MCI(2)III(2)IV(2)).

It localises to the mitochondrion inner membrane. The enzyme catalyses 4 Fe(II)-[cytochrome c] + O2 + 8 H(+)(in) = 4 Fe(III)-[cytochrome c] + 2 H2O + 4 H(+)(out). Functionally, component of the cytochrome c oxidase, the last enzyme in the mitochondrial electron transport chain which drives oxidative phosphorylation. The respiratory chain contains 3 multisubunit complexes succinate dehydrogenase (complex II, CII), ubiquinol-cytochrome c oxidoreductase (cytochrome b-c1 complex, complex III, CIII) and cytochrome c oxidase (complex IV, CIV), that cooperate to transfer electrons derived from NADH and succinate to molecular oxygen, creating an electrochemical gradient over the inner membrane that drives transmembrane transport and the ATP synthase. Cytochrome c oxidase is the component of the respiratory chain that catalyzes the reduction of oxygen to water. Electrons originating from reduced cytochrome c in the intermembrane space (IMS) are transferred via the dinuclear copper A center (CU(A)) of subunit 2 and heme A of subunit 1 to the active site in subunit 1, a binuclear center (BNC) formed by heme A3 and copper B (CU(B)). The BNC reduces molecular oxygen to 2 water molecules using 4 electrons from cytochrome c in the IMS and 4 protons from the mitochondrial matrix. This is Cytochrome c oxidase subunit 3 (MT-CO3) from Dugong dugon (Dugong).